A 660-amino-acid polypeptide reads, in one-letter code: Kinesin-like protein KIF22 (660 aa).

Residues 1-31 (MSLRAKTCPQRREMASATSGPGRCVSKGGLG) form a disordered region. Residues 38-363 (RVRVAVRLRP…LNFTARSKEV (326 aa)) form the Kinesin motor domain. 122–129 (GPTGAGKT) serves as a coordination point for ATP. Positions 391–418 (PSEAKKAKGPEEESTGSPESTAAPASAS) are disordered. Positions 405–418 (TGSPESTAAPASAS) are enriched in low complexity. Residues serine 407, serine 422, and serine 447 each carry the phosphoserine modification. A Glycyl lysine isopeptide (Lys-Gly) (interchain with G-Cter in SUMO2) cross-link involves residue lysine 460. The stretch at 460-505 (KRERMVLMKTVEEKNLEIERLKMKQKELEAKVLAQEAPDPREKENT) forms a coiled coil. Disordered regions lie at residues 493–516 (AQEA…ASYS) and 534–567 (IQKQ…VEKD). Residues 505 to 516 (TPTILQPPASYS) are compositionally biased toward polar residues. 2 positions are modified to phosphoserine: serine 540 and serine 576.

The protein belongs to the TRAFAC class myosin-kinesin ATPase superfamily. Kinesin family. As to quaternary structure, interacts with FAM83D and SIAH1. Post-translationally, ubiquitinated; mediated by SIAH1 and leading to its subsequent proteasomal degradation.

Its subcellular location is the nucleus. It localises to the cytoplasm. The protein localises to the cytoskeleton. Functionally, kinesin family member that is involved in spindle formation and the movements of chromosomes during mitosis and meiosis. Binds to microtubules and to DNA. Plays a role in congression of laterally attached chromosomes in NDC80-depleted cells. The protein is Kinesin-like protein KIF22 (Kif22) of Mus musculus (Mouse).